The chain runs to 83 residues: MSGNTGERPFADIITSIRYWVIHSITIPSLFIAGWLFVSTGLAYDVFGSPRPNEYFTESRQEIPLITGRFNSLEQVDEFTRSF.

A helical transmembrane segment spans residues 21-35 (VIHSITIPSLFIAGW). His23 contributes to the heme binding site.

This sequence belongs to the PsbE/PsbF family. In terms of assembly, heterodimer of an alpha subunit and a beta subunit. PSII is composed of 1 copy each of membrane proteins PsbA, PsbB, PsbC, PsbD, PsbE, PsbF, PsbH, PsbI, PsbJ, PsbK, PsbL, PsbM, PsbT, PsbX, PsbY, PsbZ, Psb30/Ycf12, at least 3 peripheral proteins of the oxygen-evolving complex and a large number of cofactors. It forms dimeric complexes. Heme b serves as cofactor.

Its subcellular location is the plastid. It is found in the chloroplast thylakoid membrane. This b-type cytochrome is tightly associated with the reaction center of photosystem II (PSII). PSII is a light-driven water:plastoquinone oxidoreductase that uses light energy to abstract electrons from H(2)O, generating O(2) and a proton gradient subsequently used for ATP formation. It consists of a core antenna complex that captures photons, and an electron transfer chain that converts photonic excitation into a charge separation. In Psilotum nudum (Whisk fern), this protein is Cytochrome b559 subunit alpha.